The following is a 552-amino-acid chain: HTH-type transcriptional regulator SgrR (552 aa).

The HTH marR-type domain maps to 1 to 116 (MPSARLQQQF…LVSHLGRSFR (116 aa)). Positions 26 to 49 (LNELAALLSCSRRHMRTLLNTMQD) form a DNA-binding region, H-T-H motif. A solute-binding region spans residues 163-492 (ELEADIAHHW…IDWQADAARW (330 aa)).

Its function is as follows. Activates the small RNA gene sgrS under glucose-phosphate stress conditions as well as yfdZ. Represses its own transcription under both stress and non-stress conditions. Might act as a sensor of the intracellular accumulation of phosphoglucose by binding these molecules in its C-terminal solute-binding domain. In Shigella dysenteriae serotype 1 (strain Sd197), this protein is HTH-type transcriptional regulator SgrR.